A 361-amino-acid polypeptide reads, in one-letter code: Porphobilinogen deaminase (361 aa).

An S-(dipyrrolylmethanemethyl)cysteine modification is found at Cys265. Residues 341 to 361 (LPPSSNTPTPQPITPITTNNS) form a disordered region.

It belongs to the HMBS family. Dipyrromethane is required as a cofactor.

The catalysed reaction is 4 porphobilinogen + H2O = hydroxymethylbilane + 4 NH4(+). The protein operates within porphyrin-containing compound metabolism; protoporphyrin-IX biosynthesis; coproporphyrinogen-III from 5-aminolevulinate: step 2/4. Its function is as follows. Tetrapolymerization of the monopyrrole PBG into the hydroxymethylbilane pre-uroporphyrinogen in several discrete steps. This chain is Porphobilinogen deaminase (HEM3), found in Debaryomyces hansenii (strain ATCC 36239 / CBS 767 / BCRC 21394 / JCM 1990 / NBRC 0083 / IGC 2968) (Yeast).